A 288-amino-acid chain; its full sequence is Energy-coupling factor transporter ATP-binding protein EcfA2 (288 aa).

The ABC transporter domain maps to 2 to 244 (IKFEKVNYTY…VDFLKAHELG (243 aa)). 39-46 (GHTGSGKS) provides a ligand contact to ATP.

The protein belongs to the ABC transporter superfamily. Energy-coupling factor EcfA family. As to quaternary structure, forms a stable energy-coupling factor (ECF) transporter complex composed of 2 membrane-embedded substrate-binding proteins (S component), 2 ATP-binding proteins (A component) and 2 transmembrane proteins (T component).

The protein localises to the cell membrane. Functionally, ATP-binding (A) component of a common energy-coupling factor (ECF) ABC-transporter complex. Unlike classic ABC transporters this ECF transporter provides the energy necessary to transport a number of different substrates. The sequence is that of Energy-coupling factor transporter ATP-binding protein EcfA2 from Lactococcus lactis subsp. lactis (strain IL1403) (Streptococcus lactis).